We begin with the raw amino-acid sequence, 28 residues long: VGCEECPAHCKGKNAIPTCDDGVCNCNV.

3 disulfide bridges follow: C3–C19, C6–C24, and C10–C26.

In terms of tissue distribution, expressed by the venom gland.

The protein resides in the secreted. Calcium channel activator. Rapidly and reversibly activates ryanodine receptor 1 (RYR1). This chain is Potassium channel toxin alpha-KTx 9.7, found in Hottentotta judaicus (Black scorpion).